Here is a 379-residue protein sequence, read N- to C-terminus: Leukocyte elastase inhibitor A (379 aa).

Serine 300 is subject to Phosphoserine.

It belongs to the serpin family. Ov-serpin subfamily. In terms of assembly, monomer.

It localises to the secreted. Its subcellular location is the cytoplasm. The protein resides in the cytolytic granule. The protein localises to the early endosome. Functionally, regulates the activity of the neutrophil proteases. The protein is Leukocyte elastase inhibitor A (Serpinb1a) of Rattus norvegicus (Rat).